A 206-amino-acid polypeptide reads, in one-letter code: MELNVTTLEGNAAGSVQLSDGIFGLEPRKDLIQRCVNWQLAKRQAGTHKTKGRAEIWRTGKKMFKQKGTGNARHGSARVPQFRGGGRAFGPVVRSHAHDLPKKVRALALRHALSAKAKDGGLIVIDSAELNEAKTKALVGHFSGLGLTNALIVDGAAVHAGFATAARNIPNIDVLPIQGINVYDILRRRKLVLTKAAVDALEARFK.

This sequence belongs to the universal ribosomal protein uL4 family. In terms of assembly, part of the 50S ribosomal subunit.

Functionally, one of the primary rRNA binding proteins, this protein initially binds near the 5'-end of the 23S rRNA. It is important during the early stages of 50S assembly. It makes multiple contacts with different domains of the 23S rRNA in the assembled 50S subunit and ribosome. In terms of biological role, forms part of the polypeptide exit tunnel. This chain is Large ribosomal subunit protein uL4, found in Nitrobacter hamburgensis (strain DSM 10229 / NCIMB 13809 / X14).